The sequence spans 495 residues: Protein adenylyltransferase Fic (495 aa).

The segment at 1-27 is disordered; sequence MGTEAEQPSPPSPPAQQQEQTNPPLWN. The chain crosses the membrane as a helical span at residues 36–55; it reads LYRLVLFFIAGSLAAWTIHA. TPR repeat units lie at residues 121 to 154 and 155 to 189; these read ALVS…APRH and PEVL…SPSN. An Inhibitory (S/T)XXXE(G/N) motif motif is present at residues 246–251; the sequence is SVGIEG. ATP-binding positions include glutamate 250 and 331–334; that span reads VGGH. One can recognise a Fido domain in the interval 300–435; the sequence is ITIKDILELH…IRPFVRFIAD (136 aa). Histidine 378 is a catalytic residue. Residues 382–389, 414–415, and asparagine 422 each bind ATP; these read DGNGRTSR and YY.

It belongs to the fic family. In terms of assembly, homodimer.

It localises to the membrane. It catalyses the reaction L-tyrosyl-[protein] + ATP = O-(5'-adenylyl)-L-tyrosyl-[protein] + diphosphate. The enzyme catalyses L-threonyl-[protein] + ATP = 3-O-(5'-adenylyl)-L-threonyl-[protein] + diphosphate. It carries out the reaction 3-O-(5'-adenylyl)-L-threonyl-[protein] + H2O = L-threonyl-[protein] + AMP + H(+). With respect to regulation, the side chain of Glu-250 determines which of the two opposing activities (AMPylase or de-AMPylase) will take place. In response to endoplasmic reticulum stress, mediates de-AMPylase activity. Adenylyltransferase activity is inhibited by the inhibitory helix present at the N-terminus: Glu-250 binds ATP and competes with ATP-binding at Arg-389, thereby preventing adenylyltransferase activity. In unstressed cells, disengagement of Glu-250 promotes adenylyltransferase activity. Activation dissociates ATP-binding from Glu-250, allowing ordered binding of the entire ATP moiety with the alpha-phosphate in an orientation that is productive for accepting an incoming target hydroxyl side chain. Functionally, protein that can both mediate the addition of adenosine 5'-monophosphate (AMP) to specific residues of target proteins (AMPylation), and the removal of the same modification from target proteins (de-AMPylation), depending on the context. The side chain of Glu-250 determines which of the two opposing activities (AMPylase or de-AMPylase) will take place. Acts as a key regulator of the unfolded protein response (UPR) by mediating AMPylation or de-AMPylation of Hsc70-3/BiP. In unstressed cells, acts as an adenylyltransferase by mediating AMPylation of Hsc70-3/BiP at 'Thr-518', thereby inactivating it. In response to endoplasmic reticulum stress, acts as a phosphodiesterase by mediating removal of ATP (de-AMPylation) from Hsc70-3/BiP at 'Thr-518', leading to restore HSPA5/BiP activity. The polypeptide is Protein adenylyltransferase Fic (Drosophila yakuba (Fruit fly)).